Reading from the N-terminus, the 27-residue chain is Pregnancy-associated glycoprotein 59 (27 aa).

Belongs to the peptidase A1 family. Post-translationally, glycosylated. In terms of tissue distribution, placenta.

The polypeptide is Pregnancy-associated glycoprotein 59 (PAG59) (Capra hircus (Goat)).